Here is a 273-residue protein sequence, read N- to C-terminus: MQIIRTIKELENFVQNASGKIGFVPTMGALHDGHVSLIKKCVSENETSIVSTFVNPTQFLPGEDLDKYPRKEQSDIQICEQNGVSAIFIPDANELYFEDEPLIVAPKKLSTILEGKTRPGHFDGVLRVLNKLFRLTRANSVYMGKKDTQQLIIVQNMIKTFFLNIELVACDIVREPDGLALSSRNVYICDEDKCNALRLSRSLNKALNLIQNGEEDASEIKANMLEVLEPLKVDYVAVTDRNLNEISKVEKGNTIILVAAYVGKTRLIDNIWI.

27–34 (MGALHDGH) provides a ligand contact to ATP. The Proton donor role is filled by His34. Gln58 is a binding site for (R)-pantoate. A beta-alanine-binding site is contributed by Gln58. An ATP-binding site is contributed by 144–147 (GKKD). Gln150 contributes to the (R)-pantoate binding site. ATP-binding positions include Val173 and 181-184 (LSSR).

The protein belongs to the pantothenate synthetase family. Homodimer.

The protein resides in the cytoplasm. The catalysed reaction is (R)-pantoate + beta-alanine + ATP = (R)-pantothenate + AMP + diphosphate + H(+). It participates in cofactor biosynthesis; (R)-pantothenate biosynthesis; (R)-pantothenate from (R)-pantoate and beta-alanine: step 1/1. In terms of biological role, catalyzes the condensation of pantoate with beta-alanine in an ATP-dependent reaction via a pantoyl-adenylate intermediate. In Campylobacter concisus (strain 13826), this protein is Pantothenate synthetase.